The following is a 388-amino-acid chain: Na(+)/H(+) antiporter NhaA (388 aa).

Over 1-11 (MKHLHRFFSSD) the chain is Cytoplasmic. Residues 12–31 (ASGGIILIIAAILAMIMANS) traverse the membrane as a helical segment. Residues 32–58 (GATSGWYHDFLETPVQLRVGSLEINKN) are Periplasmic-facing. Residues 59-80 (MLLWINDALMAVFFLLVGLEVK) traverse the membrane as a helical segment. The Cytoplasmic portion of the chain corresponds to 81-96 (RELMQGSLASLRQAAF). The chain crosses the membrane as a helical span at residues 97–116 (PVIAAIGGMIVPALLYLAFN). The Periplasmic segment spans residues 117 to 122 (YADPIT). A helical transmembrane segment spans residues 123-130 (REGWAIPA). The Cytoplasmic segment spans residues 131–154 (ATDIAFALGVLALLGSRVPLVLKI). A helical transmembrane segment spans residues 155 to 176 (FLMALAIIDDLGAIIIIALFYT). At 177 to 180 (NDLS) the chain is on the periplasmic side. The chain crosses the membrane as a helical span at residues 181–200 (MASLGVAAVAIAVLAVLNLC). Residues 201–204 (GVRR) lie on the Cytoplasmic side of the membrane. The chain crosses the membrane as a helical span at residues 205–222 (TGVYILVGVVLWTAVLKS). A topological domain (periplasmic) is located at residue glycine 223. The helical transmembrane segment at 224-236 (VHATLAGVIVGFF) threads the bilayer. Residues 237–253 (IPLKEKHGRSPAKRLEH) lie on the Cytoplasmic side of the membrane. Residues 254–272 (VLHPWVAYLILPLFAFANA) traverse the membrane as a helical segment. At 273–286 (GVSLQGVTLDGLTS) the chain is on the periplasmic side. A helical transmembrane segment spans residues 287 to 310 (ILPLGIIAGLLIGKPLGISLFCWL). Residues 311–339 (ALRLKLAHLPEGTTYQQIMVVGILCGIGF) are Cytoplasmic-facing. The chain crosses the membrane as a helical span at residues 340–350 (TMSIFIASLAF). The Periplasmic segment spans residues 351-357 (GSVDPEL). A helical transmembrane segment spans residues 358–380 (INWAKLGILVGSISSAVIGYSWL). Over 381–388 (RVRLRPSV) the chain is Cytoplasmic.

This sequence belongs to the NhaA Na(+)/H(+) (TC 2.A.33) antiporter family.

It localises to the cell inner membrane. The enzyme catalyses Na(+)(in) + 2 H(+)(out) = Na(+)(out) + 2 H(+)(in). Na(+)/H(+) antiporter that extrudes sodium in exchange for external protons. This Shigella flexneri protein is Na(+)/H(+) antiporter NhaA.